The following is a 386-amino-acid chain: Bifunctional enzyme IspD/IspF (386 aa).

The 2-C-methyl-D-erythritol 4-phosphate cytidylyltransferase stretch occupies residues 1-230 (MIRDERVAAI…RARSILEAPV (230 aa)). The 2-C-methyl-D-erythritol 2,4-cyclodiphosphate synthase stretch occupies residues 231-386 (AMGVGYDTHR…HAVALLVRVR (156 aa)). 2 residues coordinate a divalent metal cation: aspartate 237 and histidine 239. Residues 237–239 (DTH) and 262–263 (HS) each bind 4-CDP-2-C-methyl-D-erythritol 2-phosphate. Histidine 270 serves as a coordination point for a divalent metal cation. Residues 284–286 (DLG), 289–293 (FPDTD), 360–363 (TTGE), phenylalanine 367, and arginine 370 contribute to the 4-CDP-2-C-methyl-D-erythritol 2-phosphate site.

This sequence in the N-terminal section; belongs to the IspD/TarI cytidylyltransferase family. IspD subfamily. It in the C-terminal section; belongs to the IspF family. A divalent metal cation serves as cofactor.

It catalyses the reaction 2-C-methyl-D-erythritol 4-phosphate + CTP + H(+) = 4-CDP-2-C-methyl-D-erythritol + diphosphate. The catalysed reaction is 4-CDP-2-C-methyl-D-erythritol 2-phosphate = 2-C-methyl-D-erythritol 2,4-cyclic diphosphate + CMP. It functions in the pathway isoprenoid biosynthesis; isopentenyl diphosphate biosynthesis via DXP pathway; isopentenyl diphosphate from 1-deoxy-D-xylulose 5-phosphate: step 2/6. Its pathway is isoprenoid biosynthesis; isopentenyl diphosphate biosynthesis via DXP pathway; isopentenyl diphosphate from 1-deoxy-D-xylulose 5-phosphate: step 4/6. Bifunctional enzyme that catalyzes the formation of 4-diphosphocytidyl-2-C-methyl-D-erythritol from CTP and 2-C-methyl-D-erythritol 4-phosphate (MEP) (IspD), and catalyzes the conversion of 4-diphosphocytidyl-2-C-methyl-D-erythritol 2-phosphate (CDP-ME2P) to 2-C-methyl-D-erythritol 2,4-cyclodiphosphate (ME-CPP) with a corresponding release of cytidine 5-monophosphate (CMP) (IspF). This Anaeromyxobacter sp. (strain Fw109-5) protein is Bifunctional enzyme IspD/IspF.